Reading from the N-terminus, the 40-residue chain is Alpha-conotoxin-like Qc1.4b (40 aa).

Residues 1–19 constitute a propeptide that is removed on maturation; it reads SDGRNTAANDKASDLMALR. 2 disulfide bridges follow: Cys22–Cys28 and Cys23–Cys36. A lacks the Ser-Xaa-Pro motif that is crucial for potent interaction with nAChR region spans residues 24–26; it reads PNP. Residue Cys36 is modified to Cysteine amide. Positions 37–40 are excised as a propeptide; sequence GGGR.

This sequence belongs to the conotoxin A superfamily. As to expression, expressed by the venom duct.

The protein resides in the secreted. Functionally, alpha-conotoxins act on postsynaptic membranes, they bind to the nicotinic acetylcholine receptors (nAChR) and thus inhibit them. Has possibly a distinct nAChR binding mode from other alpha-conotoxins, due to a different three residue motif (lacks the Ser-Xaa-Pro motif). In Conus quercinus (Oak cone), this protein is Alpha-conotoxin-like Qc1.4b.